A 159-amino-acid polypeptide reads, in one-letter code: 3-hydroxyacyl-[acyl-carrier-protein] dehydratase FabZ (159 aa).

H58 is a catalytic residue.

Belongs to the thioester dehydratase family. FabZ subfamily.

The protein localises to the cytoplasm. The catalysed reaction is a (3R)-hydroxyacyl-[ACP] = a (2E)-enoyl-[ACP] + H2O. Its function is as follows. Involved in unsaturated fatty acids biosynthesis. Catalyzes the dehydration of short chain beta-hydroxyacyl-ACPs and long chain saturated and unsaturated beta-hydroxyacyl-ACPs. This chain is 3-hydroxyacyl-[acyl-carrier-protein] dehydratase FabZ, found in Helicobacter pylori (strain J99 / ATCC 700824) (Campylobacter pylori J99).